The chain runs to 218 residues: Claudin-5 (218 aa).

The Cytoplasmic segment spans residues 1–7 (MGSAALE). The helical transmembrane segment at 8–28 (ILGLVLCLVGWVGLILACGLP) threads the bilayer. The Extracellular portion of the chain corresponds to 29 to 81 (MWQVTAFLDHNIVTAQTTWKGLWMSCVVQSTGHMQCKVYESVLALSAEVQAAR). A helical membrane pass occupies residues 82–102 (ALTVGAVLLALVALFVTLTGA). At 103-123 (QCTTCVAPGPVKARVALTGGA) the chain is on the cytoplasmic side. A helical membrane pass occupies residues 124-144 (LYAVCGLLALVPLCWFANIVV). The Extracellular segment spans residues 145–160 (REFYDPTVPVSQKYEL). The chain crosses the membrane as a helical span at residues 161 to 181 (GAALYIGWAASALLMCGGGLV). Topologically, residues 182 to 218 (CCGAWVCTGRPEFSFPVKYSAPRRPTANGDYDKKNYV) are cytoplasmic. The interval 217-218 (YV) is interactions with TJP1, TJP2 and TJP3.

The protein belongs to the claudin family. As to quaternary structure, interacts with MPDZ. Directly interacts with TJP1/ZO-1, TJP2/ZO-2 and TJP3/ZO-3. As to expression, widely expressed with highest levels in the lung.

Its subcellular location is the cell junction. It is found in the tight junction. It localises to the cell membrane. In terms of biological role, plays a major role in tight junction-specific obliteration of the intercellular space, through calcium-independent cell-adhesion activity. In Mus musculus (Mouse), this protein is Claudin-5 (Cldn5).